The sequence spans 360 residues: Fructose-bisphosphate aldolase 1 (360 aa).

D-glyceraldehyde 3-phosphate is bound at residue serine 63. Catalysis depends on aspartate 110, which acts as the Proton donor. 4 residues coordinate Zn(2+): histidine 111, aspartate 145, glutamate 175, and histidine 227. Glycine 228 contributes to the dihydroxyacetone phosphate binding site. Histidine 266 is a Zn(2+) binding site. Glycine 267–serine 269 serves as a coordination point for dihydroxyacetone phosphate.

It belongs to the class II fructose-bisphosphate aldolase family. Homodimer. Zn(2+) is required as a cofactor.

It carries out the reaction beta-D-fructose 1,6-bisphosphate = D-glyceraldehyde 3-phosphate + dihydroxyacetone phosphate. It participates in carbohydrate degradation; glycolysis; D-glyceraldehyde 3-phosphate and glycerone phosphate from D-glucose: step 4/4. Functionally, catalyzes the aldol condensation of dihydroxyacetone phosphate (DHAP or glycerone-phosphate) with glyceraldehyde 3-phosphate (G3P) to form fructose 1,6-bisphosphate (FBP) in gluconeogenesis and the reverse reaction in glycolysis. The sequence is that of Fructose-bisphosphate aldolase 1 (FBA1) from Paracoccidioides lutzii (strain ATCC MYA-826 / Pb01) (Paracoccidioides brasiliensis).